The primary structure comprises 100 residues: MITEERILKVLRAPHISEKATMAAEKANTIVFKVAKDATKKEIKAAVEKLFEVEVKSVNTLITKGKTKRQGLRQGRRSDVKKAYVTLKEGQDLDFVGGAE.

Belongs to the universal ribosomal protein uL23 family. Part of the 50S ribosomal subunit. Contacts protein L29, and trigger factor when it is bound to the ribosome.

In terms of biological role, one of the early assembly proteins it binds 23S rRNA. One of the proteins that surrounds the polypeptide exit tunnel on the outside of the ribosome. Forms the main docking site for trigger factor binding to the ribosome. The protein is Large ribosomal subunit protein uL23 of Vibrio campbellii (strain ATCC BAA-1116).